The primary structure comprises 523 residues: NAD(P) transhydrogenase subunit alpha (523 aa).

The Cytoplasmic segment spans residues 1 to 411 (MKIGAPREIF…AEIATFRKQT (411 aa)). NAD(+)-binding positions include 127–130 (QKMD), V177, 197–199 (DVR), and G229. 2 helical membrane passes run 412–432 (VSQV…GMYA) and 433–455 (PPSF…QVIW). Residues 456–464 (NVSHSLHTP) lie on the Cytoplasmic side of the membrane. A helical membrane pass occupies residues 465–485 (LMAVTNAISGIVILGALLQIG). Over 486 to 489 (SGNV) the chain is Periplasmic. Residues 490-510 (LVVLLAAISVLIATINIVGGF) traverse the membrane as a helical segment. Residues 511 to 523 (LVTRRMLAMFQKS) are Cytoplasmic-facing.

This sequence belongs to the AlaDH/PNT family. In terms of assembly, heterodimer of an alpha (PntA) and a beta (PntB) chain.

The protein resides in the cell inner membrane. It carries out the reaction NAD(+) + NADPH + H(+)(in) = NADH + NADP(+) + H(+)(out). In terms of biological role, the transhydrogenation between NADH and NADP is coupled to respiration and ATP hydrolysis and functions as a proton pump across the membrane. This chain is NAD(P) transhydrogenase subunit alpha, found in Cereibacter sphaeroides (Rhodobacter sphaeroides).